Consider the following 310-residue polypeptide: Cytochrome P450 monooxygenase ppzG (310 aa).

C288 lines the heme pocket.

Belongs to the cytochrome P450 family. Heme is required as a cofactor.

It participates in secondary metabolite biosynthesis. Cytochrome P450 monooxygenase; part of the gene cluster that mediates the biosynthesis of pyrrolopyrazines, secondary metabolites showing insecticidal activity. The role of ppzG within the pathway has still to be determined. The single multifunctional NRPS ppzA is sufficient to produce peramine via condensation of 1-pyrroline-5-carboxylate and arginine, N-methylation of the alpha-amino group of arginine and reduction of the thioester and the cyclization to form an iminium ion resulting in release from the peptide synthetase. Deprotonation of this intermediate and oxidation of the pyrroline ring would give rise to peramine. In Epichloe species that produce only peramine, the peramine synthetase gene is not localized in a gene cluster, in contrast to Metarhizium species that contain additional pyrrolopyrazine biosynthesis genes. The 2-oxoglutarate-Fe(II) type oxidoreductase ppzC hydroxylates peramine to yield the newly identified compound 8-hydroxyperamine whereas ppzD converts L-proline into trans-4-hydroxy-L-proline, a precursor of peramine biosynthesis. In Metarhizium majus (strain ARSEF 297), this protein is Cytochrome P450 monooxygenase ppzG (ppzG).